Here is a 624-residue protein sequence, read N- to C-terminus: Iron transport multicopper oxidase FET3 (624 aa).

Residues Met-1–Ala-20 form the signal peptide. The Extracellular portion of the chain corresponds to Ala-21–Lys-555. Plastocyanin-like domains are found at residues Ile-46–Glu-144 and Asn-190–Asn-292. N-linked (GlcNAc...) asparagine glycosylation is found at Asn-49 and Asn-77. Positions 81 and 83 each coordinate Cu cation. Residue Asn-113 is glycosylated (N-linked (GlcNAc...) asparagine). 2 residues coordinate Cu cation: His-126 and His-128. Asn-194, Asn-198, Asn-244, Asn-265, Asn-292, Asn-300, and Asn-359 each carry an N-linked (GlcNAc...) asparagine glycan. Residues Asn-382–Asp-499 form the Plastocyanin-like 3 domain. Residues His-413, His-416, and His-418 each coordinate Cu cation. N-linked (GlcNAc...) asparagine glycosylation occurs at Asn-441. Residues His-481, Cys-482, His-483, and His-487 each contribute to the Cu cation site. Residues Gly-556–Phe-576 traverse the membrane as a helical segment. Residues Tyr-577–His-624 lie on the Cytoplasmic side of the membrane. Residues Asp-603–His-624 form a disordered region. The segment covering Val-608–His-624 has biased composition (low complexity).

Belongs to the multicopper oxidase family. Requires Cu cation as cofactor.

The protein localises to the cell membrane. Functionally, iron transport multicopper ferroxidase required for Fe(2+) high affinity uptake. Required to oxidize Fe(2+) and release it from the transporter. Essential component of copper-dependent iron transport. The sequence is that of Iron transport multicopper oxidase FET3 (FET3) from Candida albicans (Yeast).